Here is a 146-residue protein sequence, read N- to C-terminus: Protein MucA (146 aa).

Active-site for autocatalytic cleavage activity residues include serine 62 and lysine 99.

Belongs to the peptidase S24 family.

In terms of biological role, involved in UV protection and mutation. This chain is Protein MucA (mucA), found in Escherichia coli.